A 337-amino-acid polypeptide reads, in one-letter code: Large ribosomal subunit protein uL3 (337 aa).

The disordered stretch occupies residues 1 to 20 (MASIHRPKRGSLAFSPRKRA).

This sequence belongs to the universal ribosomal protein uL3 family. Part of the 50S ribosomal subunit. Forms a cluster with proteins L14 and L24e.

One of the primary rRNA binding proteins, it binds directly near the 3'-end of the 23S rRNA, where it nucleates assembly of the 50S subunit. This chain is Large ribosomal subunit protein uL3, found in Methanosarcina barkeri (strain Fusaro / DSM 804).